We begin with the raw amino-acid sequence, 368 residues long: Glutamate 5-kinase (368 aa).

Lysine 13 is an ATP binding site. Substrate contacts are provided by serine 54, aspartate 141, and asparagine 153. 173 to 174 provides a ligand contact to ATP; that stretch reads SD. Residues 278–355 enclose the PUA domain; it reads RGEITVDAGA…AEIEAVLGYP (78 aa).

The protein belongs to the glutamate 5-kinase family.

The protein resides in the cytoplasm. The catalysed reaction is L-glutamate + ATP = L-glutamyl 5-phosphate + ADP. It functions in the pathway amino-acid biosynthesis; L-proline biosynthesis; L-glutamate 5-semialdehyde from L-glutamate: step 1/2. Catalyzes the transfer of a phosphate group to glutamate to form L-glutamate 5-phosphate. The sequence is that of Glutamate 5-kinase from Dinoroseobacter shibae (strain DSM 16493 / NCIMB 14021 / DFL 12).